Here is a 265-residue protein sequence, read N- to C-terminus: uncharacterized protein (265 aa).

The tract at residues 1–160 is disordered; the sequence is MDKSKNLFDL…STEPVVAAPV (160 aa). The span at 28–42 shows a compositional bias: low complexity; that stretch reads AAAAPVAAKKPVAPK. Composition is skewed to basic and acidic residues over residues 73–85 and 102–119; these read SEER…DSKS and RQFD…ENKK.

It belongs to the SERBP1-HABP4 family.

In terms of biological role, ribosome-binding protein that acts as a regulator of mRNA translation by promoting ribosome inactivation. This is an uncharacterized protein from Dictyostelium discoideum (Social amoeba).